Consider the following 184-residue polypeptide: Photosystem I assembly protein Ycf4 (184 aa).

2 consecutive transmembrane segments (helical) span residues 22–42 (FCWA…GISS) and 57–77 (ILFF…LFIS).

The protein belongs to the Ycf4 family.

It is found in the plastid. The protein localises to the chloroplast thylakoid membrane. Seems to be required for the assembly of the photosystem I complex. In Populus trichocarpa (Western balsam poplar), this protein is Photosystem I assembly protein Ycf4.